The sequence spans 239 residues: tRNA (guanine-N(1)-)-methyltransferase (239 aa).

S-adenosyl-L-methionine is bound by residues Gly108 and 127–132; that span reads LGDYVL.

The protein belongs to the RNA methyltransferase TrmD family. In terms of assembly, homodimer.

It localises to the cytoplasm. The enzyme catalyses guanosine(37) in tRNA + S-adenosyl-L-methionine = N(1)-methylguanosine(37) in tRNA + S-adenosyl-L-homocysteine + H(+). Its function is as follows. Specifically methylates guanosine-37 in various tRNAs. The chain is tRNA (guanine-N(1)-)-methyltransferase from Streptococcus pneumoniae (strain JJA).